Consider the following 446-residue polypeptide: Sensor-type histidine kinase PrrB (446 aa).

The next 2 membrane-spanning stretches (helical) occupy residues 19-39 and 151-171; these read VVATAIGAAIPVLIVGTVVWV and LLICTFAIGAAAVFAWLLAAF. The HAMP domain occupies 172 to 222; the sequence is AVRPFKQLAEQTRSIDAGDEAPRVEVHGASEAIEIAEAMRGMLQRIWNEQN. A Histidine kinase domain is found at 237 to 446; the sequence is VSSHELRTPL…RLVLRLPGPS (210 aa). H240 carries the post-translational modification Phosphohistidine; by autocatalysis.

Post-translationally, autophosphorylated.

The protein localises to the cell membrane. It catalyses the reaction ATP + protein L-histidine = ADP + protein N-phospho-L-histidine.. Functionally, member of the two-component regulatory system PrrB/PrrA that is involved specifically in early intracellular multiplication of Mycobacterium and is essential for its viability. Functions as a sensor protein kinase which is autophosphorylated at a histidine residue and transfers its phosphate group to the conserved aspartic acid residue in the regulatory domain of PrrA. In turn, PrrA binds to the upstream promoter regions of target genes including itself to positively regulate their expression. This Mycobacterium bovis (strain ATCC BAA-935 / AF2122/97) protein is Sensor-type histidine kinase PrrB (prrB).